The sequence spans 474 residues: tRNA-2-methylthio-N(6)-dimethylallyladenosine synthase (474 aa).

The 118-residue stretch at 3 to 120 (KKLLIKTWGC…LPEMIKQSQS (118 aa)) folds into the MTTase N-terminal domain. [4Fe-4S] cluster contacts are provided by C12, C49, C83, C157, C161, and C164. The Radical SAM core domain occupies 143–375 (RAEGATAFVS…QQQINAQAMR (233 aa)). One can recognise a TRAM domain in the interval 378–441 (RLMLGTEQRV…ANSLRGEIVR (64 aa)).

The protein belongs to the methylthiotransferase family. MiaB subfamily. In terms of assembly, monomer. Requires [4Fe-4S] cluster as cofactor.

Its subcellular location is the cytoplasm. The catalysed reaction is N(6)-dimethylallyladenosine(37) in tRNA + (sulfur carrier)-SH + AH2 + 2 S-adenosyl-L-methionine = 2-methylsulfanyl-N(6)-dimethylallyladenosine(37) in tRNA + (sulfur carrier)-H + 5'-deoxyadenosine + L-methionine + A + S-adenosyl-L-homocysteine + 2 H(+). Its function is as follows. Catalyzes the methylthiolation of N6-(dimethylallyl)adenosine (i(6)A), leading to the formation of 2-methylthio-N6-(dimethylallyl)adenosine (ms(2)i(6)A) at position 37 in tRNAs that read codons beginning with uridine. The polypeptide is tRNA-2-methylthio-N(6)-dimethylallyladenosine synthase (Vibrio vulnificus (strain CMCP6)).